Here is a 420-residue protein sequence, read N- to C-terminus: Protein phosphatase methylesterase 1 (420 aa).

Low complexity-rich tracts occupy residues 18–28 and 42–51; these read PEAPLLSESSS and SSVSSTGTVI. Positions 18-51 are disordered; that stretch reads PEAPLLSESSSMNHPAESSHDEDSSSVSSTGTVI. Active-site residues include S197, D223, and H354.

This sequence belongs to the AB hydrolase superfamily.

The catalysed reaction is [phosphatase 2A protein]-C-terminal L-leucine methyl ester + H2O = [phosphatase 2A protein]-C-terminal L-leucine + methanol + H(+). Its function is as follows. Demethylates proteins that have been reversibly carboxymethylated. Demethylates the phosphatase PP2A catalytic subunit. The sequence is that of Protein phosphatase methylesterase 1 (ppe1) from Aspergillus fumigatus (strain ATCC MYA-4609 / CBS 101355 / FGSC A1100 / Af293) (Neosartorya fumigata).